The primary structure comprises 646 residues: Rho guanine nucleotide exchange factor 7 (646 aa).

The region spanning 6 to 65 (NSQLVVRAKFNFQQTNEDELSFSKGDVIHVTRVEEGGWWEGTHNGRTGWFPSNYVREIKP) is the SH3 domain. 3 positions are modified to phosphoserine: Ser-7, Ser-71, and Ser-79. Positions 93-273 (YYNVVLQNIL…KNLSAQCQEV (181 aa)) constitute a DH domain. The PH domain occupies 295-400 (DIKTLGSVTY…WVEHLQRQTK (106 aa)). The residue at position 340 (Ser-340) is a Phosphoserine. Disordered regions lie at residues 402–464 (TSVS…GPLE) and 500–520 (KTMKKLLPKRKPERKPSDEEF). Residues 415–428 (PSHTLPSHPLTPSS) show a composition bias toward polar residues. The span at 500–512 (KTMKKLLPKRKPE) shows a compositional bias: basic residues. Phosphoserine is present on residues Ser-516 and Ser-560.

Interacts with SCRIB; interaction is direct and may play a role in regulation of apoptosis. Interacts with PAK kinases through the SH3 domain. Interacts with GIT1 and probably TGFB1I1. Interacts with ITCH and PARVB. Interacts with FRMPD4 (via N-terminus). Interacts with CaMK1. Interacts with PTK2/FAK1 and RAC1. Interacts with BIN2. Interacts with YWHAZ. Interacts (via PH domain) with NOX1 (via FAD-binding FR-type domain). Post-translationally, phosphorylated on Ser-516 by CaMK1; enhancement of GEF activity and downstream activation of RAC1. Phosphorylated by PTK2/FAK1; this promotes interaction with RAC1.

The protein resides in the cell junction. Its subcellular location is the focal adhesion. It localises to the cell projection. It is found in the ruffle. The protein localises to the cytoplasm. The protein resides in the cell cortex. Its subcellular location is the lamellipodium. Its function is as follows. Acts as a RAC1 guanine nucleotide exchange factor (GEF) and can induce membrane ruffling. Functions in cell migration, attachment and cell spreading. Promotes targeting of RAC1 to focal adhesions. May function as a positive regulator of apoptosis. Downstream of NMDA receptors and CaMKK-CaMK1 signaling cascade, promotes the formation of spines and synapses in hippocampal neurons. The sequence is that of Rho guanine nucleotide exchange factor 7 (Arhgef7) from Rattus norvegicus (Rat).